The primary structure comprises 345 residues: Dihydroorotate dehydrogenase (quinone) (345 aa).

FMN contacts are provided by residues 65–69 (AGLDK) and Thr-89. A substrate-binding site is contributed by Lys-69. 114 to 118 (NRMGF) lines the substrate pocket. Residues Asn-142 and Asn-175 each coordinate FMN. Substrate is bound at residue Asn-175. Catalysis depends on Ser-178, which acts as the Nucleophile. Asn-180 is a binding site for substrate. FMN-binding residues include Lys-220 and Thr-248. A substrate-binding site is contributed by 249 to 250 (NT). Residues Gly-271, Gly-300, and 321-322 (YT) contribute to the FMN site.

This sequence belongs to the dihydroorotate dehydrogenase family. Type 2 subfamily. As to quaternary structure, monomer. FMN is required as a cofactor.

It localises to the cell membrane. The enzyme catalyses (S)-dihydroorotate + a quinone = orotate + a quinol. The protein operates within pyrimidine metabolism; UMP biosynthesis via de novo pathway; orotate from (S)-dihydroorotate (quinone route): step 1/1. Functionally, catalyzes the conversion of dihydroorotate to orotate with quinone as electron acceptor. The polypeptide is Dihydroorotate dehydrogenase (quinone) (Burkholderia mallei (strain NCTC 10247)).